A 248-amino-acid chain; its full sequence is MPRFKLLIEYDGAPFVGWQRQANGFSVQEAIETALGGFTGESVAIHGAGRTDAGVHARGQVAHVDFSRDWRPDVLRDAANAWLRPNPIAILKAERVDDEFSARFSAVRRHYLYKIINRRASLTLEAGRCWAIRRSLDAGAMHEAAQTLLGFHDFSTFRDSECQAESPLRTLERFDVLRDGENIEIHVAARSFLHSQVRSMVGSLAHVGSGKWRVEDMAEALAAKDRRRCGVVAPPEGLYLMQVDYEEA.

The Nucleophile role is filled by D52. Substrate is bound at residue Y111.

The protein belongs to the tRNA pseudouridine synthase TruA family. Homodimer.

The enzyme catalyses uridine(38/39/40) in tRNA = pseudouridine(38/39/40) in tRNA. In terms of biological role, formation of pseudouridine at positions 38, 39 and 40 in the anticodon stem and loop of transfer RNAs. This is tRNA pseudouridine synthase A from Methylocella silvestris (strain DSM 15510 / CIP 108128 / LMG 27833 / NCIMB 13906 / BL2).